The chain runs to 61 residues: UPF0434 protein PSPA7_2181 (61 aa).

This sequence belongs to the UPF0434 family.

The polypeptide is UPF0434 protein PSPA7_2181 (Pseudomonas paraeruginosa (strain DSM 24068 / PA7) (Pseudomonas aeruginosa (strain PA7))).